The chain runs to 513 residues: Solute carrier family 2, facilitated glucose transporter member 7 (513 aa).

Topologically, residues 1-21 are cytoplasmic; it reads MEDKEIGTPLPLPHSEARLQP. The helical transmembrane segment at 22–42 threads the bilayer; the sequence is TLVLTTLSAAFGSVFQYGYNI. Residues 43-78 lie on the Extracellular side of the membrane; it reads AVINTPHKVFKSFYNDTHFERHGTFMDESTLLLLWS. An N-linked (GlcNAc...) asparagine glycan is attached at Asn-57. A helical transmembrane segment spans residues 79-99; it reads CTVSMFPLGGLLGSLVVGLMV. Residues 100 to 107 lie on the Cytoplasmic side of the membrane; the sequence is NKWGRKGT. The helical transmembrane segment at 108–128 threads the bilayer; the sequence is LLINNVFAITSAVLMGVSKVA. At 129–138 the chain is on the extracellular side; it reads RAFELIILSR. The chain crosses the membrane as a helical span at residues 139–159; it reads VLVGICAGIAYSTLPMYLGEL. At 160–172 the chain is on the cytoplasmic side; the sequence is APQNLRGALGTMT. A helical transmembrane segment spans residues 173-193; sequence EVFVIIGVLLAQIFSLQAILG. Topologically, residues 194–198 are extracellular; it reads NATGW. The chain crosses the membrane as a helical span at residues 199 to 219; it reads PILLALTGVPAVIQLLSLPFF. Over 220–282 the chain is Cytoplasmic; sequence PESPRYTLIE…LNLFTFRPLR (63 aa). A helical transmembrane segment spans residues 283–303; that stretch reads WQLISIVVLMAGQQLSGINAV. D-glucose contacts are provided by residues 295-296 and Asn-301; that span reads QQ. The Extracellular portion of the chain corresponds to 304 to 322; that stretch reads NYYADVIYTSAGVDPTQSQ. The chain crosses the membrane as a helical span at residues 323-343; the sequence is YVTLGSGVINLVMTLVSAVII. Asn-332 is a binding site for D-glucose. Residues 344-351 lie on the Cytoplasmic side of the membrane; that stretch reads ERLGRRIL. Residues 352–372 form a helical membrane-spanning segment; sequence LLSGYAICCSACLVLTVALLL. The Extracellular portion of the chain corresponds to 373–380; that stretch reads QSTAPELS. The helical transmembrane segment at 381-401 threads the bilayer; the sequence is YLSIVCVFSYIVGHSIGPSPV. Residues 402–416 are Cytoplasmic-facing; it reads PSVVRTEIVLQSSRT. Residues 417-437 form a helical membrane-spanning segment; it reads AAFTVDGAVHWLTNFIVGLTF. Over 438–446 the chain is Extracellular; it reads PSIQVAIGA. A helical membrane pass occupies residues 447-467; sequence YSFLVFAGVCILTAAYIYVVI. Residues 468–513 are Cytoplasmic-facing; sequence PETKGRTFVEINCAFAKRNGVEFPEEKEVATAKPHTPSLPTKETAF. The disordered stretch occupies residues 494 to 513; it reads KEVATAKPHTPSLPTKETAF.

This sequence belongs to the major facilitator superfamily. Sugar transporter (TC 2.A.1.1) family. Glucose transporter subfamily.

It localises to the cell membrane. It is found in the apical cell membrane. It catalyses the reaction D-glucose(out) = D-glucose(in). It carries out the reaction D-fructose(out) = D-fructose(in). Probable sugar transporter. Even if its physiological substrate is subject to discussion, it is able to transport glucose and fructose. Does not transport galactose, 2-deoxy-d-glucose and xylose. The sequence is that of Solute carrier family 2, facilitated glucose transporter member 7 from Mus musculus (Mouse).